We begin with the raw amino-acid sequence, 394 residues long: Aspergillopepsin-1 (394 aa).

Positions 1–20 (MVVFSKTAALVLGLSTAVSA) are cleaved as a signal peptide. A propeptide spans 21–69 (APAPTRKGFTINQIARPANKTRTVNLPGLYARSLAKFGGTVPQSVKEAA) (activation peptide). In terms of domain architecture, Peptidase A1 spans 85 to 391 (YLTPVTVGKS…NSEGPKLGFA (307 aa)). Residue Asp101 is part of the active site. 2 O-linked (Man...) serine glycosylation sites follow: Ser129 and Ser304. A disulfide bond links Cys319 and Cys354.

It belongs to the peptidase A1 family. In terms of assembly, monomer.

The protein localises to the secreted. It carries out the reaction Hydrolysis of proteins with broad specificity. Generally favors hydrophobic residues in P1 and P1', but also accepts Lys in P1, which leads to activation of trypsinogen. Does not clot milk.. Its function is as follows. Secreted aspartic endopeptidase that allows assimilation of proteinaceous substrates. The scissile peptide bond is attacked by a nucleophilic water molecule activated by two aspartic residues in the active site. Shows a broad primary substrate specificity. Favors hydrophobic residues at the P1 and P1' positions, but also accepts a lysine residue in the P1 position, leading to the activation of trypsinogen and chymotrypsinogen A. This Aspergillus phoenicis (Aspergillus saitoi) protein is Aspergillopepsin-1 (pepA).